The sequence spans 336 residues: DNA-directed RNA polymerase subunit alpha (336 aa).

An alpha N-terminal domain (alpha-NTD) region spans residues 1-232; that stretch reads MIQKNWQELI…DQLSVFVNFD (232 aa). Residues 248 to 336 are alpha C-terminal domain (alpha-CTD); it reads FNPALLKKVD…DLAKRYEDQY (89 aa).

The protein belongs to the RNA polymerase alpha chain family. As to quaternary structure, homodimer. The RNAP catalytic core consists of 2 alpha, 1 beta, 1 beta' and 1 omega subunit. When a sigma factor is associated with the core the holoenzyme is formed, which can initiate transcription.

It catalyses the reaction RNA(n) + a ribonucleoside 5'-triphosphate = RNA(n+1) + diphosphate. DNA-dependent RNA polymerase catalyzes the transcription of DNA into RNA using the four ribonucleoside triphosphates as substrates. The polypeptide is DNA-directed RNA polymerase subunit alpha (Sinorhizobium fredii (strain NBRC 101917 / NGR234)).